Here is a 512-residue protein sequence, read N- to C-terminus: Eukaryotic translation initiation factor 3 subunit L (512 aa).

In terms of domain architecture, PCI spans 291–477; sequence DAFRLFESIL…GERQFTDSVD (187 aa).

This sequence belongs to the eIF-3 subunit L family. In terms of assembly, component of the eukaryotic translation initiation factor 3 (eIF-3) complex.

It is found in the cytoplasm. Its function is as follows. Component of the eukaryotic translation initiation factor 3 (eIF-3) complex, which is involved in protein synthesis of a specialized repertoire of mRNAs and, together with other initiation factors, stimulates binding of mRNA and methionyl-tRNAi to the 40S ribosome. The eIF-3 complex specifically targets and initiates translation of a subset of mRNAs involved in cell proliferation. The sequence is that of Eukaryotic translation initiation factor 3 subunit L from Monosiga brevicollis (Choanoflagellate).